Reading from the N-terminus, the 716-residue chain is tRNA(Met) cytidine acetyltransferase TmcA (716 aa).

ATP contacts are provided by residues Gln-192, 217–226 (GRGKSYVIGL), and Arg-364. One can recognise an N-acetyltransferase domain in the interval 401-567 (REVLARDREV…KNVALAKPLD (167 aa)). Acetyl-CoA contacts are provided by residues 493 to 495 (IAV) and 500 to 506 (QRRGLGS).

The protein belongs to the RNA cytidine acetyltransferase family. TmcA subfamily.

It is found in the cytoplasm. The catalysed reaction is cytidine(34) in elongator tRNA(Met) + acetyl-CoA + ATP + H2O = N(4)-acetylcytidine(34) in elongator tRNA(Met) + ADP + phosphate + CoA + H(+). Catalyzes the formation of N(4)-acetylcytidine (ac(4)C) at the wobble position of tRNA(Met), by using acetyl-CoA as an acetyl donor and ATP (or GTP). The polypeptide is tRNA(Met) cytidine acetyltransferase TmcA (Aeropyrum pernix (strain ATCC 700893 / DSM 11879 / JCM 9820 / NBRC 100138 / K1)).